Reading from the N-terminus, the 360-residue chain is NAD(P)H-quinone oxidoreductase subunit 1, chloroplastic (360 aa).

Helical transmembrane passes span 27-47, 98-118, 129-149, 165-185, 203-223, 253-273, 297-317, and 340-360; these read IWIF…VLVI, FSIG…VIPF, IGIF…LMSG, AAQS…ISLL, FWGW…ISSL, FGLF…FVTV, IFGT…FLFV, and FLLP…LFSL.

Belongs to the complex I subunit 1 family. In terms of assembly, NDH is composed of at least 16 different subunits, 5 of which are encoded in the nucleus.

Its subcellular location is the plastid. The protein localises to the chloroplast thylakoid membrane. The enzyme catalyses a plastoquinone + NADH + (n+1) H(+)(in) = a plastoquinol + NAD(+) + n H(+)(out). It carries out the reaction a plastoquinone + NADPH + (n+1) H(+)(in) = a plastoquinol + NADP(+) + n H(+)(out). NDH shuttles electrons from NAD(P)H:plastoquinone, via FMN and iron-sulfur (Fe-S) centers, to quinones in the photosynthetic chain and possibly in a chloroplast respiratory chain. The immediate electron acceptor for the enzyme in this species is believed to be plastoquinone. Couples the redox reaction to proton translocation, and thus conserves the redox energy in a proton gradient. This is NAD(P)H-quinone oxidoreductase subunit 1, chloroplastic from Arabidopsis thaliana (Mouse-ear cress).